The following is a 227-amino-acid chain: Phosphatidylserine decarboxylase proenzyme (227 aa).

The Schiff-base intermediate with substrate; via pyruvic acid role is filled by serine 181. The residue at position 181 (serine 181) is a Pyruvic acid (Ser); by autocatalysis.

This sequence belongs to the phosphatidylserine decarboxylase family. PSD-A subfamily. In terms of assembly, heterodimer of a large membrane-associated beta subunit and a small pyruvoyl-containing alpha subunit. It depends on pyruvate as a cofactor. Is synthesized initially as an inactive proenzyme. Formation of the active enzyme involves a self-maturation process in which the active site pyruvoyl group is generated from an internal serine residue via an autocatalytic post-translational modification. Two non-identical subunits are generated from the proenzyme in this reaction, and the pyruvate is formed at the N-terminus of the alpha chain, which is derived from the carboxyl end of the proenzyme. The post-translation cleavage follows an unusual pathway, termed non-hydrolytic serinolysis, in which the side chain hydroxyl group of the serine supplies its oxygen atom to form the C-terminus of the beta chain, while the remainder of the serine residue undergoes an oxidative deamination to produce ammonia and the pyruvoyl prosthetic group on the alpha chain.

The protein localises to the cell membrane. The catalysed reaction is a 1,2-diacyl-sn-glycero-3-phospho-L-serine + H(+) = a 1,2-diacyl-sn-glycero-3-phosphoethanolamine + CO2. Its pathway is phospholipid metabolism; phosphatidylethanolamine biosynthesis; phosphatidylethanolamine from CDP-diacylglycerol: step 2/2. Its function is as follows. Catalyzes the formation of phosphatidylethanolamine (PtdEtn) from phosphatidylserine (PtdSer). This is Phosphatidylserine decarboxylase proenzyme from Anaplasma phagocytophilum (strain HZ).